Here is a 136-residue protein sequence, read N- to C-terminus: Peptide methionine sulfoxide reductase MsrB (136 aa).

The 128-residue stretch at 9-136 folds into the MsrB domain; sequence DAEWKALLAE…NSASLDFKPK (128 aa). Zn(2+) is bound by residues C53, C56, C102, and C105. The active-site Nucleophile is C125.

Belongs to the MsrB Met sulfoxide reductase family. The cofactor is Zn(2+).

It carries out the reaction L-methionyl-[protein] + [thioredoxin]-disulfide + H2O = L-methionyl-(R)-S-oxide-[protein] + [thioredoxin]-dithiol. The polypeptide is Peptide methionine sulfoxide reductase MsrB (Polaromonas sp. (strain JS666 / ATCC BAA-500)).